The following is a 351-amino-acid chain: Peptide chain release factor 1 (351 aa).

Position 229 is an N5-methylglutamine (Gln229). The interval 279–300 (ADAERAADRKSQVGSGDRSERI) is disordered.

Belongs to the prokaryotic/mitochondrial release factor family. In terms of processing, methylated by PrmC. Methylation increases the termination efficiency of RF1.

It localises to the cytoplasm. Its function is as follows. Peptide chain release factor 1 directs the termination of translation in response to the peptide chain termination codons UAG and UAA. In Paracoccus denitrificans (strain Pd 1222), this protein is Peptide chain release factor 1.